An 85-amino-acid polypeptide reads, in one-letter code: Large ribosomal subunit protein bL27 (85 aa).

The protein belongs to the bacterial ribosomal protein bL27 family.

The protein is Large ribosomal subunit protein bL27 of Xylella fastidiosa (strain 9a5c).